Here is a 747-residue protein sequence, read N- to C-terminus: Phenylalanine ammonia-lyase 2 (747 aa).

Residues 1 to 20 (MTILSGTTAAPRVNGTTMNG) show a composition bias toward polar residues. Positions 1 to 47 (MTILSGTTAAPRVNGTTMNGHSKPHTNGVHLNGHAPKATTESPWPQS) are disordered. Catalysis depends on tyrosine 124, which acts as the Proton donor/acceptor. The segment at residues 229–231 (ASG) is a cross-link (5-imidazolinone (Ala-Gly)). Serine 230 is modified (2,3-didehydroalanine (Ser)). Positions 290, 380, 386, 416, 487, 515, and 518 each coordinate (E)-cinnamate.

This sequence belongs to the PAL/histidase family. Homotetramer. In terms of processing, contains an active site 4-methylidene-imidazol-5-one (MIO), which is formed autocatalytically by cyclization and dehydration of residues Ala-Ser-Gly.

The protein localises to the cytoplasm. The enzyme catalyses L-phenylalanine = (E)-cinnamate + NH4(+). It functions in the pathway phenylpropanoid metabolism; trans-cinnamate biosynthesis; trans-cinnamate from L-phenylalanine: step 1/1. Its function is as follows. Catalyzes the non-oxidative deamination of L-phenylalanine to form trans-cinnamic acid and a free ammonium ion. Facilitates the commitment step in phenylpropanoid pathways that produce secondary metabolites such as lignins, coumarins and flavonoids. The protein is Phenylalanine ammonia-lyase 2 of Pleurotus ostreatus (Oyster mushroom).